The chain runs to 100 residues: NAD(P)H-quinone oxidoreductase subunit 4L, chloroplastic (100 aa).

A run of 3 helical transmembrane segments spans residues 1-21 (MLEH…YGLI), 31-51 (ICLE…SDFF), and 60-80 (IFAI…LAIL).

Belongs to the complex I subunit 4L family. As to quaternary structure, NDH is composed of at least 16 different subunits, 5 of which are encoded in the nucleus.

Its subcellular location is the plastid. It is found in the chloroplast thylakoid membrane. It catalyses the reaction a plastoquinone + NADH + (n+1) H(+)(in) = a plastoquinol + NAD(+) + n H(+)(out). The catalysed reaction is a plastoquinone + NADPH + (n+1) H(+)(in) = a plastoquinol + NADP(+) + n H(+)(out). In terms of biological role, NDH shuttles electrons from NAD(P)H:plastoquinone, via FMN and iron-sulfur (Fe-S) centers, to quinones in the photosynthetic chain and possibly in a chloroplast respiratory chain. The immediate electron acceptor for the enzyme in this species is believed to be plastoquinone. Couples the redox reaction to proton translocation, and thus conserves the redox energy in a proton gradient. The polypeptide is NAD(P)H-quinone oxidoreductase subunit 4L, chloroplastic (Trachelium caeruleum (Blue throatwort)).